Reading from the N-terminus, the 37-residue chain is Cytochrome b6-f complex subunit 5 (37 aa).

The chain crosses the membrane as a helical span at residues 5–25; the sequence is LLSGIVLGLIPITLFGLLVAA.

The protein belongs to the PetG family. As to quaternary structure, the 4 large subunits of the cytochrome b6-f complex are cytochrome b6, subunit IV (17 kDa polypeptide, PetD), cytochrome f and the Rieske protein, while the 4 small subunits are PetG, PetL, PetM and PetN. The complex functions as a dimer.

It is found in the plastid. It localises to the chloroplast thylakoid membrane. Its function is as follows. Component of the cytochrome b6-f complex, which mediates electron transfer between photosystem II (PSII) and photosystem I (PSI), cyclic electron flow around PSI, and state transitions. PetG is required for either the stability or assembly of the cytochrome b6-f complex. This Pyropia yezoensis (Susabi-nori) protein is Cytochrome b6-f complex subunit 5.